Here is a 209-residue protein sequence, read N- to C-terminus: Octanoyltransferase (209 aa).

The BPL/LPL catalytic domain maps to 30–209 (DNEPEIVYLV…IQTEFNKIFK (180 aa)). Substrate contacts are provided by residues 69–76 (RGGKFTFH), 143–145 (AIG), and 156–158 (GIA). Cysteine 174 serves as the catalytic Acyl-thioester intermediate.

This sequence belongs to the LipB family.

It is found in the cytoplasm. The enzyme catalyses octanoyl-[ACP] + L-lysyl-[protein] = N(6)-octanoyl-L-lysyl-[protein] + holo-[ACP] + H(+). The protein operates within protein modification; protein lipoylation via endogenous pathway; protein N(6)-(lipoyl)lysine from octanoyl-[acyl-carrier-protein]: step 1/2. Its function is as follows. Catalyzes the transfer of endogenously produced octanoic acid from octanoyl-acyl-carrier-protein onto the lipoyl domains of lipoate-dependent enzymes. Lipoyl-ACP can also act as a substrate although octanoyl-ACP is likely to be the physiological substrate. This Rickettsia prowazekii (strain Madrid E) protein is Octanoyltransferase.